Consider the following 303-residue polypeptide: MRHSTTLTGCATGAAGLLAATAAAAQQQSLEIIGRPQPGGTGFQPSASPVATQIHWLDGFILVIIAAITIFVTLLILYAVWRFHEKRNKVPARFTHNSPLEIAWTIVPIVILVAIGAFSLPVLFNQQEIPEADVTVKVTGYQWYWGYEYPDEEISFESYMIGSPATGGDNRMSPEVEQQLIEAGYSRDEFLLATDTAMVVPVNKTVVVQVTGADVIHSWTVPAFGVKQDAVPGRLAQLWFRAEREGIFFGQCSELCGISHAYMPITVKVVSEEAYAAWLEQARGGTYELSSVLPATPAGVSVE.

An N-terminal signal peptide occupies residues 1-25; that stretch reads MRHSTTLTGCATGAAGLLAATAAAA. A run of 2 helical transmembrane segments spans residues 60 to 80 and 104 to 124; these read FILV…LYAV and WTIV…PVLF. Cu cation contacts are provided by H217, C252, C256, and H260.

The protein belongs to the cytochrome c oxidase subunit 2 family. Requires Cu cation as cofactor.

It is found in the cell membrane. The enzyme catalyses 4 Fe(II)-[cytochrome c] + O2 + 8 H(+)(in) = 4 Fe(III)-[cytochrome c] + 2 H2O + 4 H(+)(out). Its function is as follows. Subunits I and II form the functional core of the enzyme complex. Electrons originating in cytochrome c are transferred via heme a and Cu(A) to the binuclear center formed by heme a3 and Cu(B). This is Cytochrome c oxidase subunit 2 (ctaC) from Cereibacter sphaeroides (Rhodobacter sphaeroides).